We begin with the raw amino-acid sequence, 968 residues long: Alanine--tRNA ligase, cytoplasmic (968 aa).

At methionine 1 the chain carries N-acetylmethionine. Serine 3 and serine 8 each carry phosphoserine. Lysine 19 is subject to N6-acetyllysine. ATP is bound by residues arginine 77, histidine 95, tryptophan 176, and 214–216 (IWN). L-alanine contacts are provided by asparagine 216 and aspartate 239. Glycine 243 provides a ligand contact to ATP. Serine 399 and serine 555 each carry phosphoserine. Positions 605, 609, 723, and 727 each coordinate Zn(2+). Positions 750 to 763 (RRIVAVTGAEAQKA) match the Nuclear localization signal motif. Lysine 876 carries the N6-acetyllysine modification. Residue lysine 943 is modified to N6,N6,N6-trimethyllysine; alternate. Residue lysine 943 is modified to N6,N6-dimethyllysine; alternate. The residue at position 943 (lysine 943) is an N6-methyllysine; alternate.

This sequence belongs to the class-II aminoacyl-tRNA synthetase family. In terms of assembly, monomer. Interacts with ANKRD16; the interaction is direct. The cofactor is Zn(2+). In terms of processing, ISGylated. Post-translationally, methylation at 'Lys-943' by METTL21C.

The protein resides in the cytoplasm. It localises to the nucleus. The catalysed reaction is tRNA(Ala) + L-alanine + ATP = L-alanyl-tRNA(Ala) + AMP + diphosphate. The enzyme catalyses (S)-lactate + ATP + H(+) = (S)-lactoyl-AMP + diphosphate. It catalyses the reaction (S)-lactoyl-AMP + L-lysyl-[protein] = N(6)-[(S)-lactoyl]-L-lysyl-[protein] + AMP + 2 H(+). The protein lactyltransferase activity is inhibited by beta-alanine. In terms of biological role, catalyzes the attachment of alanine to tRNA(Ala) in a two-step reaction: alanine is first activated by ATP to form Ala-AMP and then transferred to the acceptor end of tRNA(Ala). Also edits incorrectly charged tRNA(Ala) via its editing domain. In presence of high levels of lactate, also acts as a protein lactyltransferase that mediates lactylation of lysine residues in target proteins, such as TEAD1, TP53/p53 and YAP1. Protein lactylation takes place in a two-step reaction: lactate is first activated by ATP to form lactate-AMP and then transferred to lysine residues of target proteins. Acts as an inhibitor of TP53/p53 activity by catalyzing lactylation of TP53/p53. Acts as a positive regulator of the Hippo pathway by mediating lactylation of TEAD1 and YAP1. This chain is Alanine--tRNA ligase, cytoplasmic, found in Homo sapiens (Human).